Reading from the N-terminus, the 764-residue chain is Molybdenum cofactor sulfurase 3 (764 aa).

The residue at position 228 (K228) is an N6-(pyridoxal phosphate)lysine. Residue C394 is part of the active site. Residues 607–762 (LRLLKQSDEE…LYCNSVVEGL (156 aa)) enclose the MOSC domain.

Belongs to the class-V pyridoxal-phosphate-dependent aminotransferase family. MOCOS subfamily. Pyridoxal 5'-phosphate is required as a cofactor.

It carries out the reaction Mo-molybdopterin + L-cysteine + AH2 = thio-Mo-molybdopterin + L-alanine + A + H2O. Sulfurates the molybdenum cofactor. Sulfation of molybdenum is essential for xanthine dehydrogenase (XDH) and aldehyde oxidase (ADO) enzymes in which molybdenum cofactor is liganded by 1 oxygen and 1 sulfur atom in active form. The protein is Molybdenum cofactor sulfurase 3 of Aedes aegypti (Yellowfever mosquito).